The chain runs to 296 residues: Tubulin polyglutamylase complex subunit 2 (296 aa).

Residues 257–296 (KILIPKKKGPVQPVSGQKGPGPLAPPTSKPSAGCGNPVRK) form a disordered region.

Part of the neuronal tubulin polyglutamylase complex which contains TPGS1, TPGS2, TTLL1, LRRC49 and NICN1. Interacts with CSTPP1 and LRRC49.

Its subcellular location is the cytoplasm. The protein localises to the cytoskeleton. The protein resides in the microtubule organizing center. It localises to the centrosome. It is found in the centriolar satellite. Its function is as follows. Subunit of the tubulin polyglutamylase complex (TPGC). The complex mediates cilia and flagella polyglutamylation which is essential for their biogenesis and motility. This chain is Tubulin polyglutamylase complex subunit 2 (Tpgs2), found in Rattus norvegicus (Rat).